The primary structure comprises 321 residues: 4-dihydromethyl-trisporate dehydrogenase (321 aa).

Y51 (proton donor) is an active-site residue. H113 contributes to the substrate binding site.

It belongs to the aldo/keto reductase family.

It functions in the pathway pheromone biosynthesis; trisporate biosynthesis. Its function is as follows. Catalyzes the NADP-dependent oxidation of (+) mating-type specific precursor 4-dihydromethyl-trisporate to methyl-trisporate. This Mucor mucedo (Common pinmould) protein is 4-dihydromethyl-trisporate dehydrogenase (tdh).